Reading from the N-terminus, the 284-residue chain is MLQNEVENFANLLEQATVYLAPYQEKIIVVKYGGNAMINEDRKKLVMQDILLLNQLGVKVVLVHGGGPEISQGVKLLGKEPQFINGLRVTDQDTINVVLQMLAGKVNKSLVALLKGKGVGLCGIDANMLQCEKLQAEVDYGFVGEIVKVNTQLLELALSANLIPVISTVGVDDQGVAYNINADTVASEIAMALGAAKLVSMTDIAGLLRDRFDESTLIPEVEVSEVQGLIDQGIIAGGMIPKIACCTDFINAGGIEANIIDGRVPHAILVSLFGGKNGTLFYKK.

Substrate is bound by residues 66–67 (GG), Arg88, and Asn179.

The protein belongs to the acetylglutamate kinase family. ArgB subfamily.

The protein localises to the cytoplasm. It catalyses the reaction N-acetyl-L-glutamate + ATP = N-acetyl-L-glutamyl 5-phosphate + ADP. The protein operates within amino-acid biosynthesis; L-arginine biosynthesis; N(2)-acetyl-L-ornithine from L-glutamate: step 2/4. Functionally, catalyzes the ATP-dependent phosphorylation of N-acetyl-L-glutamate. This is Acetylglutamate kinase from Actinobacillus pleuropneumoniae serotype 5b (strain L20).